The following is a 773-amino-acid chain: Probable dipeptidyl peptidase 4 (773 aa).

An N-terminal signal peptide occupies residues 1-18; sequence MKLSVLSVLLVSVAQAAA. N-linked (GlcNAc...) asparagine glycosylation is found at Asn37, Asn80, Asn112, Asn220, Asn471, and Asn496. Ser619 acts as the Charge relay system in catalysis. A glycan (N-linked (GlcNAc...) asparagine) is linked at Asn671. Residues Asp696 and His731 each act as charge relay system in the active site.

This sequence belongs to the peptidase S9B family.

The protein resides in the secreted. The enzyme catalyses Release of an N-terminal dipeptide, Xaa-Yaa-|-Zaa-, from a polypeptide, preferentially when Yaa is Pro, provided Zaa is neither Pro nor hydroxyproline.. Functionally, extracellular dipeptidyl-peptidase which removes N-terminal dipeptides sequentially from polypeptides having unsubstituted N-termini provided that the penultimate residue is proline. This is Probable dipeptidyl peptidase 4 (dpp4) from Emericella nidulans (strain FGSC A4 / ATCC 38163 / CBS 112.46 / NRRL 194 / M139) (Aspergillus nidulans).